Here is a 236-residue protein sequence, read N- to C-terminus: uncharacterized protein (236 aa).

The N-terminal stretch at 1-29 is a signal peptide; the sequence is MKGGDKMKKLILLMLLLPISLIGCTDEES.

This is an uncharacterized protein from Archaeoglobus fulgidus (strain ATCC 49558 / DSM 4304 / JCM 9628 / NBRC 100126 / VC-16).